The primary structure comprises 52 residues: Superoxide dismutase [Cu-Zn] 2 (52 aa).

His-44 contacts Cu cation.

The protein belongs to the Cu-Zn superoxide dismutase family. Homodimer. Requires Cu cation as cofactor. Zn(2+) serves as cofactor.

The protein resides in the cytoplasm. The enzyme catalyses 2 superoxide + 2 H(+) = H2O2 + O2. In terms of biological role, destroys radicals which are normally produced within the cells and which are toxic to biological systems. The sequence is that of Superoxide dismutase [Cu-Zn] 2 from Debaryomyces hansenii (Yeast).